Here is an 88-residue protein sequence, read N- to C-terminus: Putative membrane protein insertion efficiency factor (88 aa).

The segment at Val68–Leu88 is disordered. Residues Thr75–Leu88 are compositionally biased toward basic and acidic residues.

This sequence belongs to the UPF0161 family.

Its subcellular location is the cell inner membrane. In terms of biological role, could be involved in insertion of integral membrane proteins into the membrane. In Burkholderia cenocepacia (strain ATCC BAA-245 / DSM 16553 / LMG 16656 / NCTC 13227 / J2315 / CF5610) (Burkholderia cepacia (strain J2315)), this protein is Putative membrane protein insertion efficiency factor.